The chain runs to 200 residues: Potassium-transporting ATPase KdpC subunit (200 aa).

The helical transmembrane segment at 13-33 (ITLIFWLITAIIYPLAILVVG) threads the bilayer.

Belongs to the KdpC family. The system is composed of three essential subunits: KdpA, KdpB and KdpC.

It is found in the cell membrane. In terms of biological role, part of the high-affinity ATP-driven potassium transport (or Kdp) system, which catalyzes the hydrolysis of ATP coupled with the electrogenic transport of potassium into the cytoplasm. This subunit acts as a catalytic chaperone that increases the ATP-binding affinity of the ATP-hydrolyzing subunit KdpB by the formation of a transient KdpB/KdpC/ATP ternary complex. The polypeptide is Potassium-transporting ATPase KdpC subunit (Anabaena sp. (strain L31)).